A 1189-amino-acid polypeptide reads, in one-letter code: Pumilio homolog 1 (1189 aa).

An N-acetylserine modification is found at Ser-2. Phosphoserine is present on Ser-19. The interval 22-73 (LKHHPQEPANPNMPVVLTSGTGSQAQPQPAANQALAAGTHSSPVPGSIGVAG) is disordered. Low complexity predominate over residues 45 to 58 (QAQPQPAANQALAA). 3 positions are modified to phosphoserine: Ser-75, Ser-98, and Ser-106. At Thr-112 the chain carries Phosphothreonine. 5 positions are modified to phosphoserine: Ser-124, Ser-159, Ser-197, Ser-209, and Ser-229. The disordered stretch occupies residues 233–272 (SCLRKGGFGPRDADSDENDKGEKKNKGTFDGDKLGDLKEE). Basic and acidic residues predominate over residues 250–272 (NDKGEKKNKGTFDGDKLGDLKEE). Ser-305 is subject to Phosphoserine. Over residues 491-503 (QQSAPQAQQGQQQ) the composition is skewed to low complexity. Disordered stretches follow at residues 491–525 (QQSA…GQQT) and 614–647 (AGTT…SSFY). Residues 512–525 (RPLTPNQNQQGQQT) are compositionally biased toward polar residues. At Thr-515 the chain carries Phosphothreonine. Low complexity predominate over residues 627 to 647 (QQPQPQPQQQPSNNLASSSFY). Ser-710 and Ser-715 each carry phosphoserine. The tract at residues 743–773 (GPVGMPLPSQGPGHSQTPPPSLSSHGSSSSL) is disordered. A compositionally biased stretch (low complexity) spans 764-773 (LSSHGSSSSL). Arg-797 bears the Omega-N-methylarginine mark. 2 positions are modified to phosphoserine: Ser-807 and Ser-823. The region spanning 829–1171 (GRSRLLEDFR…HILAKLEKYY (343 aa)) is the PUM-HD domain. 8 Pumilio repeats span residues 849 to 884 (EIAG…LVFN), 885 to 920 (EILQ…ALAE), 921 to 958 (RIRG…EMVR), 959 to 994 (ELDG…FIID), 995 to 1030 (AFKG…PILE), 1031 to 1066 (ELHQ…KIVA), 1067 to 1102 (EIRG…VLID), and 1106 to 1145 (TMND…IVMH). The tract at residues 864 to 868 (SRFIQ) is adenine-nucleotide binding in RNA target. Residues 900–904 (NYVIQ) form a uracil-nucleotide binding in RNA target region. The tract at residues 936 to 940 (CRVIQ) is adenine-nucleotide binding in RNA target. Positions 974–978 (NHVVQ) are non-specific-nucleotide binding in RNA target. The tract at residues 1010–1014 (CRVIQ) is adenine-nucleotide binding in RNA target. Positions 1046-1050 (NYVIQ) are uracil-nucleotide binding in RNA target. 2 guanine-nucleotide binding in RNA target regions span residues 1082-1086 (SNVVE) and 1083-1086 (NVVE). A uracil-nucleotide binding in RNA target region spans residues 1125–1129 (NYVVQ).

In terms of assembly, recruits the CCR4-POP2-NOT deadenylase leading to translational inhibition and mRNA degradation. Interacts with TRIM71 (via NHL repeats) in an RNA-dependent manner. Phosphorylation at Ser-715 promotes RNA-binding activity. Following growth factor stimulation phosphorylated at Ser-715, promoting binding to the 3'-UTR of CDKN1B/p27 mRNA. As to expression, widely expressed. Expressed in brain, heart, kidney, liver, lung, skin, intestine, spleen, testis and thymus. Weakly or not expressed in muscles and stomach. Expressed at various stages of myeloid and lymphoid cell development. Highly expressed in testis. Expressed in all major brain regions (at protein level).

Its subcellular location is the cytoplasm. The protein resides in the P-body. It is found in the cytoplasmic granule. Its function is as follows. Sequence-specific RNA-binding protein that acts as a post-transcriptional repressor by binding the 3'-UTR of mRNA targets. Binds to an RNA consensus sequence, the Pumilio Response Element (PRE), 5'-UGUANAUA-3', that is related to the Nanos Response Element (NRE). Mediates post-transcriptional repression of transcripts via different mechanisms: acts via direct recruitment of the CCR4-POP2-NOT deadenylase leading to translational inhibition and mRNA degradation. Also mediates deadenylation-independent repression by promoting accessibility of miRNAs. Following growth factor stimulation, phosphorylated and binds to the 3'-UTR of CDKN1B/p27 mRNA, inducing a local conformational change that exposes miRNA-binding sites, promoting association of miR-221 and miR-222, efficient suppression of CDKN1B/p27 expression, and rapid entry to the cell cycle. Acts as a post-transcriptional repressor of E2F3 mRNAs by binding to its 3'-UTR and facilitating miRNA regulation. Represses a program of genes necessary to maintain genomic stability such as key mitotic, DNA repair and DNA replication factors. Its ability to repress those target mRNAs is regulated by the lncRNA NORAD (non-coding RNA activated by DNA damage) which, due to its high abundance and multitude of PUMILIO binding sites, is able to sequester a significant fraction of PUM1 and PUM2 in the cytoplasm. Involved in neuronal functions by regulating ATXN1 mRNA levels: acts by binding to the 3'-UTR of ATXN1 transcripts, leading to their down-regulation independently of the miRNA machinery. In testis, acts as a post-transcriptional regulator of spermatogenesis by binding to the 3'-UTR of mRNAs coding for regulators of p53/TP53. Involved in embryonic stem cell renewal by facilitating the exit from the ground state: acts by targeting mRNAs coding for naive pluripotency transcription factors and accelerates their down-regulation at the onset of differentiation. Binds specifically to miRNA MIR199A precursor, with PUM2, regulates miRNA MIR199A expression at a postranscriptional level. This chain is Pumilio homolog 1, found in Mus musculus (Mouse).